We begin with the raw amino-acid sequence, 567 residues long: ERO1-like protein 2 (567 aa).

Residues 1 to 22 (MKIAKGLVGLLILYKNVCQVLC) form the signal peptide. N-linked (GlcNAc...) asparagine glycosylation is present at N49. Disulfide bonds link C88–C386, C98–C103, C154–C325, and C389–C392. Residues R188, T190, W201, S258, H261, and K290 each coordinate FAD. C389 acts as the Nucleophile in catalysis. C392 is an active-site residue. N-linked (GlcNAc...) asparagine glycosylation is present at N546.

The protein belongs to the EROs family. In terms of assembly, may function both as a monomer and a homodimer. The cofactor is FAD. Post-translationally, N-glycosylated.

The protein localises to the endoplasmic reticulum membrane. Essential oxidoreductase that oxidizes proteins in the endoplasmic reticulum to produce disulfide bonds. Acts by oxidizing directly pdi1 isomerase through a direct disulfide exchange. Does not act as a direct oxidant of folding substrate, but relies on pdi1 to transfer oxidizing equivalent. Does not oxidize all pdi related proteins, suggesting that it can discriminate between pdi1 and related proteins. Its reoxidation probably involves electron transfer to molecular oxygen via FAD. Acts independently of glutathione. May be responsible for a significant proportion of reactive oxygen species (ROS) in the cell, thereby being a source of oxidative stress. The polypeptide is ERO1-like protein 2 (ero12) (Schizosaccharomyces pombe (strain 972 / ATCC 24843) (Fission yeast)).